The primary structure comprises 110 residues: Large ribosomal subunit protein uL22 (110 aa).

It belongs to the universal ribosomal protein uL22 family. As to quaternary structure, part of the 50S ribosomal subunit.

Functionally, this protein binds specifically to 23S rRNA; its binding is stimulated by other ribosomal proteins, e.g. L4, L17, and L20. It is important during the early stages of 50S assembly. It makes multiple contacts with different domains of the 23S rRNA in the assembled 50S subunit and ribosome. The globular domain of the protein is located near the polypeptide exit tunnel on the outside of the subunit, while an extended beta-hairpin is found that lines the wall of the exit tunnel in the center of the 70S ribosome. The polypeptide is Large ribosomal subunit protein uL22 (Histophilus somni (strain 2336) (Haemophilus somnus)).